A 120-amino-acid polypeptide reads, in one-letter code: Large ribosomal subunit protein uL18 (120 aa).

This sequence belongs to the universal ribosomal protein uL18 family. In terms of assembly, part of the 50S ribosomal subunit; part of the 5S rRNA/L5/L18/L25 subcomplex. Contacts the 5S and 23S rRNAs.

Functionally, this is one of the proteins that bind and probably mediate the attachment of the 5S RNA into the large ribosomal subunit, where it forms part of the central protuberance. This Trichodesmium erythraeum (strain IMS101) protein is Large ribosomal subunit protein uL18.